Here is a 460-residue protein sequence, read N- to C-terminus: Argininosuccinate lyase (460 aa).

It belongs to the lyase 1 family. Argininosuccinate lyase subfamily.

Its subcellular location is the cytoplasm. The catalysed reaction is 2-(N(omega)-L-arginino)succinate = fumarate + L-arginine. Its pathway is amino-acid biosynthesis; L-arginine biosynthesis; L-arginine from L-ornithine and carbamoyl phosphate: step 3/3. The sequence is that of Argininosuccinate lyase from Streptococcus sanguinis (strain SK36).